Consider the following 1054-residue polypeptide: Translation initiation factor IF-2 (1054 aa).

Disordered stretches follow at residues 57–213 (DKRK…AASC), 225–248 (DPLALNSSPQSSAAFCPDARNPGD), 287–315 (SGRPRAASRRTAVQRPSGRAGAGASHGLQ), and 401–436 (DHAGRGRELVDVSKNKDKSPRKRGGPNDTSISKQEL). Positions 92–104 (QEPSQAASDVSSP) are enriched in polar residues. Low complexity predominate over residues 111 to 213 (EASGAEAAAS…VTSGRRAASC (103 aa)). Basic and acidic residues predominate over residues 401–418 (DHAGRGRELVDVSKNKDK). Residues 552 to 721 (TRPPVVTVMG…VLQAEVLELT (170 aa)) form the tr-type G domain. The interval 561–568 (GHVDHGKT) is G1. 561-568 (GHVDHGKT) contributes to the GTP binding site. Positions 586–590 (GITQH) are G2. The tract at residues 607 to 610 (DTPG) is G3. GTP-binding positions include 607-611 (DTPGH) and 661-664 (NKMD). The segment at 661–664 (NKMD) is G4. The segment at 697-699 (SAK) is G5.

The protein belongs to the TRAFAC class translation factor GTPase superfamily. Classic translation factor GTPase family. IF-2 subfamily.

It localises to the cytoplasm. One of the essential components for the initiation of protein synthesis. Protects formylmethionyl-tRNA from spontaneous hydrolysis and promotes its binding to the 30S ribosomal subunits. Also involved in the hydrolysis of GTP during the formation of the 70S ribosomal complex. This is Translation initiation factor IF-2 (infB) from Stigmatella aurantiaca.